The sequence spans 232 residues: Ornithine carbamoyltransferase (232 aa).

Residues Gln15, Arg39, and 66-69 (HPTQ) contribute to the carbamoyl phosphate site. L-ornithine-binding positions include Asn99, Asp163, and 167-168 (SM). Carbamoyl phosphate-binding positions include 204 to 207 (HCLP) and Thr232.

The protein belongs to the aspartate/ornithine carbamoyltransferase superfamily. OTCase family.

The protein localises to the cytoplasm. The enzyme catalyses carbamoyl phosphate + L-ornithine = L-citrulline + phosphate + H(+). The protein operates within amino-acid biosynthesis; L-arginine biosynthesis; L-arginine from L-ornithine and carbamoyl phosphate: step 1/3. Functionally, reversibly catalyzes the transfer of the carbamoyl group from carbamoyl phosphate (CP) to the N(epsilon) atom of ornithine (ORN) to produce L-citrulline. In Neisseria subflava, this protein is Ornithine carbamoyltransferase (argF).